The chain runs to 129 residues: uncharacterized protein (129 aa).

Over residues 91–114 (ASEKVGEMKEAASEKASEMKEAVS) the composition is skewed to basic and acidic residues. The interval 91 to 129 (ASEKVGEMKEAASEKASEMKEAVSEKATQAVDAVKEATK) is disordered.

It belongs to the LEA type 1 family.

This is an uncharacterized protein from Haemophilus influenzae (strain ATCC 51907 / DSM 11121 / KW20 / Rd).